The sequence spans 358 residues: uncharacterized protein (358 aa).

Positions 229–264 (KQLHEFKLAFDYFDQEKNGWLDYEHFELCLKSQGYN) constitute an EF-hand domain. Ca(2+) contacts are provided by Asp-242, Asn-246, Trp-248, and His-253.

This is an uncharacterized protein from Caenorhabditis elegans.